Consider the following 91-residue polypeptide: Small ribosomal subunit protein uS15 (91 aa).

This sequence belongs to the universal ribosomal protein uS15 family. In terms of assembly, part of the 30S ribosomal subunit. Forms a bridge to the 50S subunit in the 70S ribosome, contacting the 23S rRNA.

Its function is as follows. One of the primary rRNA binding proteins, it binds directly to 16S rRNA where it helps nucleate assembly of the platform of the 30S subunit by binding and bridging several RNA helices of the 16S rRNA. In terms of biological role, forms an intersubunit bridge (bridge B4) with the 23S rRNA of the 50S subunit in the ribosome. This is Small ribosomal subunit protein uS15 from Deinococcus geothermalis (strain DSM 11300 / CIP 105573 / AG-3a).